The following is an 878-amino-acid chain: Splicing factor 3B subunit 2 (878 aa).

The segment covering 1–10 (MAAEHPEPPK) has biased composition (basic and acidic residues). Disordered stretches follow at residues 1–25 (MAAEHPEPPKGELQLPPPPPPGHYG) and 67–136 (RPVL…LRVG). Lysine 10 is covalently cross-linked (Glycyl lysine isopeptide (Lys-Gly) (interchain with G-Cter in SUMO2)). One can recognise an SAP domain in the interval 24-58 (YGAWAAQELQARLAEIGAPIQGSREELVERLQTYT). 2 stretches are compositionally biased toward pro residues: residues 91-114 (PMPPPPMGLPPLQPPPPPPPPPPG) and 122-133 (AHPPNLGPPPPL). The stretch at 140-177 (ALSEEERLKLAQQQAALLMQQEERAKQAAVLMEQERQQ) forms a coiled coil. 2 disordered regions span residues 183–356 (GTAV…EYVT) and 383–436 (KKEK…SKKK). Residues 201-221 (PLGPRVAAPVGPVVPTPTVLP) show a composition bias toward low complexity. Omega-N-methylarginine occurs at positions 205, 228, and 230. Residues 224 to 237 (APVPRPRGPPPPPG) show a composition bias toward pro residues. Lysine 258 carries the N6-acetyllysine modification. Residues 260 to 269 (LQLKESRQEE) are compositionally biased toward basic and acidic residues. Lysine 263 is covalently cross-linked (Glycyl lysine isopeptide (Lys-Gly) (interchain with G-Cter in SUMO2)). Serine 272 is subject to Phosphoserine. Threonine 281 carries the phosphothreonine modification. Serine 290 and serine 292 each carry phosphoserine. A Phosphothreonine modification is found at threonine 294. The residue at position 300 (serine 300) is a Phosphoserine. Residues 305 to 321 (EKNRKRRNRKKKKKPQR) show a composition bias toward basic residues. Over residues 330-342 (SGDREKDSGRSRG) the composition is skewed to basic and acidic residues. A Phosphoserine modification is found at serine 343. Glycyl lysine isopeptide (Lys-Gly) (interchain with G-Cter in SUMO2) cross-links involve residues lysine 383 and lysine 395. Basic and acidic residues-rich tracts occupy residues 383–397 (KKEKEKEPEKLDKME) and 405–414 (KGFEEEHKDS). Positions 384 to 533 (KEKEKEPEKL…QEKEEQKTMK (150 aa)) are required for interaction with PRMT9. Phosphoserine is present on residues serine 414, serine 418, and serine 419. A Glycyl lysine isopeptide (Lys-Gly) (interchain with G-Cter in SUMO2) cross-link involves residue lysine 475. Omega-N-methylarginine occurs at positions 491 and 498. A Symmetric dimethylarginine modification is found at arginine 491. Lysine 526 participates in a covalent cross-link: Glycyl lysine isopeptide (Lys-Gly) (interchain with G-Cter in SUMO2). The interval 674–740 (AAEFQTKTEE…PGGFSSVPAG (67 aa)) is disordered. Residues 695 to 715 (EPSDEESSEEEEEEESDEDKP) are compositionally biased toward acidic residues. A Glycyl lysine isopeptide (Lys-Gly) (interchain with G-Cter in SUMO2) cross-link involves residue lysine 753. Threonine 763 is modified (phosphothreonine). Glycyl lysine isopeptide (Lys-Gly) (interchain with G-Cter in SUMO2) cross-links involve residues lysine 773, lysine 826, and lysine 840. The segment covering 827–852 (YEEHVREQQAQVEKEDFSDMVAEHAA) has biased composition (basic and acidic residues). The interval 827–878 (YEEHVREQQAQVEKEDFSDMVAEHAAKQKQKKRKAQPQDSRGGSKKYKEFKF) is disordered. Phosphoserine is present on serine 844.

As to quaternary structure, component of the 17S U2 SnRNP complex, a ribonucleoprotein complex that contains small nuclear RNA (snRNA) U2 and a number of specific proteins. Part of the SF3B subcomplex of the 17S U2 SnRNP complex. SF3B associates with the splicing subcomplex SF3A and a 12S RNA unit to form the U2 small nuclear ribonucleoproteins complex (U2 snRNP). Within the SF3B complex, interacts directly with SF3B4. Found in a complex with PRMT9, SF3B2 and SF3B4. Interacts (Arg-491-methylated form) with SMN1 (via Tudor domain). Interacts with RBM7. Interacts with ERCC6. Component of the minor spliceosome. Within this complex, interacts with SCNM1 and CRIPT. Methylation at Arg-491 by PRMT9 is required for the interaction with SMN1.

The protein resides in the nucleus. It is found in the nucleus speckle. Its function is as follows. Component of the 17S U2 SnRNP complex of the spliceosome, a large ribonucleoprotein complex that removes introns from transcribed pre-mRNAs. The 17S U2 SnRNP complex (1) directly participates in early spliceosome assembly and (2) mediates recognition of the intron branch site during pre-mRNA splicing by promoting the selection of the pre-mRNA branch-site adenosine, the nucleophile for the first step of splicing. Within the 17S U2 SnRNP complex, SF3B2 is part of the SF3B subcomplex, which is required for 'A' complex assembly formed by the stable binding of U2 snRNP to the branchpoint sequence in pre-mRNA. Sequence independent binding of SF3A and SF3B subcomplexes upstream of the branch site is essential, it may anchor U2 snRNP to the pre-mRNA. May also be involved in the assembly of the 'E' complex. Also acts as a component of the minor spliceosome, which is involved in the splicing of U12-type introns in pre-mRNAs. The protein is Splicing factor 3B subunit 2 of Mus musculus (Mouse).